The chain runs to 105 residues: Ig lambda chain C region (105 aa).

One can recognise an Ig-like domain in the interval 2 to 100; the sequence is PKAAPTVNLF…EGTIVEKTVT (99 aa). A disulfide bond links Cys27 and Cys86.

This is Ig lambda chain C region from Sus scrofa (Pig).